Consider the following 275-residue polypeptide: Pantothenate synthetase (275 aa).

An ATP-binding site is contributed by 26–33 (MGFLHEGH). The active-site Proton donor is the His-33. Gln-57 is a binding site for (R)-pantoate. Gln-57 serves as a coordination point for beta-alanine. 143 to 146 (GQKD) is an ATP binding site. Gln-149 is a binding site for (R)-pantoate. ATP-binding positions include Ala-172 and 180-183 (RSSR).

This sequence belongs to the pantothenate synthetase family. As to quaternary structure, homodimer.

The protein resides in the cytoplasm. The catalysed reaction is (R)-pantoate + beta-alanine + ATP = (R)-pantothenate + AMP + diphosphate + H(+). It functions in the pathway cofactor biosynthesis; (R)-pantothenate biosynthesis; (R)-pantothenate from (R)-pantoate and beta-alanine: step 1/1. In terms of biological role, catalyzes the condensation of pantoate with beta-alanine in an ATP-dependent reaction via a pantoyl-adenylate intermediate. This Gluconobacter oxydans (strain 621H) (Gluconobacter suboxydans) protein is Pantothenate synthetase.